Here is a 446-residue protein sequence, read N- to C-terminus: Dimethylsulfoniopropionate lyase DddP (446 aa).

The span at 1–13 shows a compositional bias: basic and acidic residues; it reads MNQHYSETRKIDP. Positions 1–30 are disordered; that stretch reads MNQHYSETRKIDPSRGATLGDNTPNDNNRI. Residues Asp295, Asp297, Asp307, His371, Glu406, and Glu421 each coordinate a divalent metal cation.

This sequence belongs to the peptidase M24B family. Homodimer. A divalent metal cation serves as cofactor.

The enzyme catalyses S,S-dimethyl-beta-propiothetin = acrylate + dimethyl sulfide + H(+). Its function is as follows. Able to cleave dimethylsulfoniopropionate (DMSP), releasing dimethyl sulfide (DMS). DMS is the principal form by which sulfur is transported from oceans to the atmosphere. The real activity of the protein is however subject to debate and it is unclear whether it constitutes a real dimethylsulfoniopropionate lyase in vivo: the low activity with DMSP as substrate suggests that DMSP is not its native substrate. In Roseovarius nubinhibens (strain ATCC BAA-591 / DSM 15170 / ISM), this protein is Dimethylsulfoniopropionate lyase DddP.